Consider the following 281-residue polypeptide: Elongation factor Ts (281 aa).

The involved in Mg(2+) ion dislocation from EF-Tu stretch occupies residues 80-83 (TDFV).

This sequence belongs to the EF-Ts family.

The protein resides in the cytoplasm. Associates with the EF-Tu.GDP complex and induces the exchange of GDP to GTP. It remains bound to the aminoacyl-tRNA.EF-Tu.GTP complex up to the GTP hydrolysis stage on the ribosome. The polypeptide is Elongation factor Ts (Vibrio parahaemolyticus serotype O3:K6 (strain RIMD 2210633)).